We begin with the raw amino-acid sequence, 411 residues long: Endo-1,4-beta-xylanase A (411 aa).

The N-terminal stretch at 1 to 33 (MKKFKIRKLMARVLALALVFSTFFMVSKVDANA) is a signal peptide. Residues 34-382 (ASYNLMETYG…KPAYDEVVKA (349 aa)) form the GH10 domain. Residue glutamate 201 is the Proton donor of the active site. The active-site Nucleophile is the glutamate 311. Positions 387–411 (FGNPGSFTPQPTITPQPTPTPSGQT) are disordered. Positions 398-411 (TITPQPTPTPSGQT) are enriched in pro residues.

It belongs to the glycosyl hydrolase 10 (cellulase F) family.

The enzyme catalyses Endohydrolysis of (1-&gt;4)-beta-D-xylosidic linkages in xylans.. It functions in the pathway glycan degradation; xylan degradation. Its function is as follows. B.fibrisolvens is located in the rumen of ruminant animals, where it contributes to the animal's digestion of plant material by hydrolyzing hemicellulose with its xylanases. The polypeptide is Endo-1,4-beta-xylanase A (xynA) (Butyrivibrio fibrisolvens).